The sequence spans 79 residues: Pyridoxal 5'-phosphate synthase PDX1-like 4 (79 aa).

Belongs to the PdxS/SNZ family.

The sequence is that of Pyridoxal 5'-phosphate synthase PDX1-like 4 (PDX1L4) from Arabidopsis thaliana (Mouse-ear cress).